A 158-amino-acid chain; its full sequence is MQGTLSVWLAKRGLVHRSLGFDYQGIETLQIKPEDWDSIAVILYVYGYNYLRSQCAYDVAPGGLLASVYHLTRIEYGVNQAEEVCIKVFTHRSNPRIPSVFWVWKSTDFQERESYDMLGITYDSHPRLKRILMPESWIGWPLRKDYIAPNFYEIQDAY.

This sequence belongs to the complex I 30 kDa subunit family. In terms of assembly, NDH is composed of at least 16 different subunits, 5 of which are encoded in the nucleus.

The protein localises to the plastid. The protein resides in the chloroplast thylakoid membrane. It carries out the reaction a plastoquinone + NADH + (n+1) H(+)(in) = a plastoquinol + NAD(+) + n H(+)(out). It catalyses the reaction a plastoquinone + NADPH + (n+1) H(+)(in) = a plastoquinol + NADP(+) + n H(+)(out). Its function is as follows. NDH shuttles electrons from NAD(P)H:plastoquinone, via FMN and iron-sulfur (Fe-S) centers, to quinones in the photosynthetic chain and possibly in a chloroplast respiratory chain. The immediate electron acceptor for the enzyme in this species is believed to be plastoquinone. Couples the redox reaction to proton translocation, and thus conserves the redox energy in a proton gradient. The sequence is that of NAD(P)H-quinone oxidoreductase subunit J, chloroplastic from Nasturtium officinale (Watercress).